The following is a 377-amino-acid chain: tRNA(Met) cytidine acetate ligase (377 aa).

ATP-binding positions include 7-20, Gly101, Asn152, and Arg179; that span reads ITEY…HLYH.

This sequence belongs to the TmcAL family.

The protein resides in the cytoplasm. The catalysed reaction is cytidine(34) in elongator tRNA(Met) + acetate + ATP = N(4)-acetylcytidine(34) in elongator tRNA(Met) + AMP + diphosphate. Its function is as follows. Catalyzes the formation of N(4)-acetylcytidine (ac(4)C) at the wobble position of elongator tRNA(Met), using acetate and ATP as substrates. First activates an acetate ion to form acetyladenylate (Ac-AMP) and then transfers the acetyl group to tRNA to form ac(4)C34. The polypeptide is tRNA(Met) cytidine acetate ligase (Oenococcus oeni (strain ATCC BAA-331 / PSU-1)).